The following is a 447-amino-acid chain: Serine/threonine-protein phosphatase 2A 55 kDa regulatory subunit B gamma isoform (447 aa).

7 WD repeats span residues 22 to 61 (TEAD…KNAP), 87 to 128 (EIEE…KRPE), 171 to 209 (GHTY…RSFN), 220 to 260 (DLTE…LCDK), 279 to 317 (EIIS…RPIE), 334 to 375 (ENDC…DVTL), and 410 to 446 (DFTK…NSDV).

The protein belongs to the phosphatase 2A regulatory subunit B family. As to quaternary structure, PP2A consists of a common heterodimeric core enzyme, composed of a 36 kDa catalytic subunit (subunit C) and a 65 kDa constant regulatory subunit (PR65 or subunit A), that associates with a variety of regulatory subunits. Proteins that associate with the core dimer include three families of regulatory subunits B (the R2/B/PR55/B55, R3/B''/PR72/PR130/PR59 and R5/B'/B56 families), the 48 kDa variable regulatory subunit, viral proteins, and cell signaling molecules. Interacts with IER5. As to expression, highly expressed in brain.

Its function is as follows. The B regulatory subunit might modulate substrate selectivity and catalytic activity, and might also direct the localization of the catalytic enzyme to a particular subcellular compartment. This chain is Serine/threonine-protein phosphatase 2A 55 kDa regulatory subunit B gamma isoform (PPP2R2C), found in Oryctolagus cuniculus (Rabbit).